The sequence spans 131 residues: Large ribosomal subunit protein uL24 (131 aa).

This sequence belongs to the universal ribosomal protein uL24 family. Part of the 50S ribosomal subunit.

In terms of biological role, one of two assembly initiator proteins, it binds directly to the 5'-end of the 23S rRNA, where it nucleates assembly of the 50S subunit. Its function is as follows. Located at the polypeptide exit tunnel on the outside of the subunit. This is Large ribosomal subunit protein uL24 from Korarchaeum cryptofilum (strain OPF8).